Here is a 441-residue protein sequence, read N- to C-terminus: Homoserine dehydrogenase (441 aa).

Asn17 and Val18 together coordinate NADP(+). Residues Val18 and Gly47 each contribute to the NAD(+) site. NADPH is bound at residue Val18. NADP(+) contacts are provided by Arg49, Arg50, and Lys107. Residue Arg49 participates in NADPH binding. Lys107 provides a ligand contact to NADPH. Residues Glu131, Val134, Gly136, and Ile138 each coordinate Na(+). NADP(+) is bound by residues Gly189 and Glu192. Residues Glu192 and Asp203 each coordinate L-homoserine. Lys207 (proton donor) is an active-site residue. Gly309 serves as a coordination point for NADP(+). An NAD(+)-binding site is contributed by Gly309. Residue Gly309 participates in NADPH binding. The region spanning 356-435 (YVSMNVADKP…VVQGVTSVLR (80 aa)) is the ACT domain.

Belongs to the homoserine dehydrogenase family. A metal cation is required as a cofactor.

The catalysed reaction is L-homoserine + NADP(+) = L-aspartate 4-semialdehyde + NADPH + H(+). It catalyses the reaction L-homoserine + NAD(+) = L-aspartate 4-semialdehyde + NADH + H(+). The protein operates within amino-acid biosynthesis; L-methionine biosynthesis via de novo pathway; L-homoserine from L-aspartate: step 3/3. It participates in amino-acid biosynthesis; L-threonine biosynthesis; L-threonine from L-aspartate: step 3/5. In terms of biological role, catalyzes the conversion of L-aspartate-beta-semialdehyde (L-Asa) to L-homoserine (L-Hse), the third step in the biosynthesis of threonine and methionine from aspartate. This is Homoserine dehydrogenase (hom) from Mycobacterium leprae (strain TN).